The chain runs to 376 residues: Acetate kinase (376 aa).

N7 contacts Mg(2+). K14 is a binding site for ATP. Substrate is bound at residue R71. D128 (proton donor/acceptor) is an active-site residue. ATP contacts are provided by residues 188–192 (HLGNG), 262–264 (DFR), and 310–314 (GVGEN). E364 serves as a coordination point for Mg(2+).

Belongs to the acetokinase family. Homodimer. Mg(2+) serves as cofactor. Mn(2+) is required as a cofactor.

The protein localises to the cytoplasm. The enzyme catalyses acetate + ATP = acetyl phosphate + ADP. Its pathway is metabolic intermediate biosynthesis; acetyl-CoA biosynthesis; acetyl-CoA from acetate: step 1/2. Its function is as follows. Catalyzes the formation of acetyl phosphate from acetate and ATP. Can also catalyze the reverse reaction. This chain is Acetate kinase, found in Mycolicibacterium smegmatis (strain ATCC 700084 / mc(2)155) (Mycobacterium smegmatis).